The following is a 757-amino-acid chain: Protein transport protein SEC23-2 (757 aa).

Positions 56, 61, 80, and 83 each coordinate Zn(2+).

Belongs to the SEC23/SEC24 family. SEC23 subfamily. The COPII coat is composed of at least 5 proteins: the SEC23/24 complex, the SEC13/31 complex, and the protein SAR1.

Its subcellular location is the cytoplasm. It is found in the cytoplasmic vesicle. The protein resides in the COPII-coated vesicle membrane. It localises to the endoplasmic reticulum membrane. The protein localises to the golgi apparatus membrane. In terms of biological role, component of the coat protein complex II (COPII) which promotes the formation of transport vesicles from the endoplasmic reticulum (ER). The coat has two main functions, the physical deformation of the endoplasmic reticulum membrane into vesicles and the selection of cargo molecules. The chain is Protein transport protein SEC23-2 (SEC232) from Candida glabrata (strain ATCC 2001 / BCRC 20586 / JCM 3761 / NBRC 0622 / NRRL Y-65 / CBS 138) (Yeast).